Reading from the N-terminus, the 317-residue chain is Phospho-N-acetylmuramoyl-pentapeptide-transferase (317 aa).

A run of 9 helical transmembrane segments spans residues 4–24, 49–69, 76–96, 112–132, 147–167, 186–206, 223–243, 246–266, and 297–317; these read LIYS…ILIP, TPTM…AVIV, AMIA…DDTL, MILL…NPYI, LGVF…NAVN, FLAL…CAIL, IFMG…VAMI, LPLL…SVIF, and RVVS…FLSL.

Belongs to the glycosyltransferase 4 family. MraY subfamily. Mg(2+) is required as a cofactor.

It is found in the cell membrane. The enzyme catalyses UDP-N-acetyl-alpha-D-muramoyl-L-alanyl-gamma-D-glutamyl-meso-2,6-diaminopimeloyl-D-alanyl-D-alanine + di-trans,octa-cis-undecaprenyl phosphate = di-trans,octa-cis-undecaprenyl diphospho-N-acetyl-alpha-D-muramoyl-L-alanyl-D-glutamyl-meso-2,6-diaminopimeloyl-D-alanyl-D-alanine + UMP. It participates in cell wall biogenesis; peptidoglycan biosynthesis. Its function is as follows. Catalyzes the initial step of the lipid cycle reactions in the biosynthesis of the cell wall peptidoglycan: transfers peptidoglycan precursor phospho-MurNAc-pentapeptide from UDP-MurNAc-pentapeptide onto the lipid carrier undecaprenyl phosphate, yielding undecaprenyl-pyrophosphoryl-MurNAc-pentapeptide, known as lipid I. This chain is Phospho-N-acetylmuramoyl-pentapeptide-transferase, found in Clostridium kluyveri (strain NBRC 12016).